The primary structure comprises 455 residues: UDP-N-acetylmuramoylalanine--D-glutamate ligase (455 aa).

119–125 (GTNGKTT) contributes to the ATP binding site.

This sequence belongs to the MurCDEF family.

The protein resides in the cytoplasm. It catalyses the reaction UDP-N-acetyl-alpha-D-muramoyl-L-alanine + D-glutamate + ATP = UDP-N-acetyl-alpha-D-muramoyl-L-alanyl-D-glutamate + ADP + phosphate + H(+). The protein operates within cell wall biogenesis; peptidoglycan biosynthesis. Functionally, cell wall formation. Catalyzes the addition of glutamate to the nucleotide precursor UDP-N-acetylmuramoyl-L-alanine (UMA). The chain is UDP-N-acetylmuramoylalanine--D-glutamate ligase from Listeria monocytogenes serovar 1/2a (strain ATCC BAA-679 / EGD-e).